The primary structure comprises 509 residues: 3-isopropylmalate dehydratase large subunit, chloroplastic (509 aa).

Residues 1 to 24 (MASVISSSPFLCKSSSKSDLGISS) show a composition bias toward low complexity. Residues 1 to 25 (MASVISSSPFLCKSSSKSDLGISSF) are disordered. The transit peptide at 1-47 (MASVISSSPFLCKSSSKSDLGISSFPKSSQISIHRCQKKSISRKIVS) directs the protein to the chloroplast. [4Fe-4S] cluster contacts are provided by C376, C445, and C448.

Belongs to the aconitase/IPM isomerase family. In terms of assembly, heterodimer of the large LEUC/IIL1 subunit and the small LEUD (SSU1, SSU2 or SSU3) subunits. It depends on [4Fe-4S] cluster as a cofactor. Expressed in roots, leaves, stems and flowers. Expressed at low levels in siliques.

It is found in the plastid. The protein resides in the chloroplast stroma. The enzyme catalyses (2R,3S)-3-isopropylmalate = (2S)-2-isopropylmalate. The catalysed reaction is a 2-(omega-methylsulfanyl)alkylmalate = a 2-(omega-methylsulfanyl)alkylmaleate + H2O. It catalyses the reaction 2-(3-methylsulfanyl)propylmalate = 2-(2-methylsulfanyl)propylmaleate + H2O. It carries out the reaction a 3-(omega-methylsulfanyl)alkylmalate = a 2-(omega-methylsulfanyl)alkylmaleate + H2O. The enzyme catalyses 2-(2-methylsulfanyl)ethylmalate = 2-(2-methylsulfanyl)ethylmaleate + H2O. The catalysed reaction is 3-(2-methylsulfanyl)ethylmalate = 2-(2-methylsulfanyl)ethylmaleate + H2O. It catalyses the reaction 3-(3-methylsulfanyl)propylmalate = 2-(2-methylsulfanyl)propylmaleate + H2O. The protein operates within amino-acid biosynthesis; L-leucine biosynthesis; L-leucine from 3-methyl-2-oxobutanoate: step 2/4. Its function is as follows. Catalyzes the isomerization between 2-isopropylmalate and 3-isopropylmalate, via the formation of 2-isopropylmaleate. Functions in both the biosynthesis of leucine and in the methionine chain elongation pathway of aliphatic glucosinolate formation. The protein is 3-isopropylmalate dehydratase large subunit, chloroplastic of Arabidopsis thaliana (Mouse-ear cress).